A 281-amino-acid chain; its full sequence is Protein NipSnap homolog 2 (281 aa).

The N-terminal 27 residues, 1–27, are a transit peptide targeting the mitochondrion; sequence MAARVLLARGGLLRPAAQSAFLPGLRT.

Belongs to the NipSnap family. In terms of assembly, interacts with CALCOCO2/NDP52, NBR1, SQSTM1/p62, TAX1BP1 and WDFY3/ALFY. Interacts with ATG8 family proteins (MAP1LC3A, MAP1LC3B, MAP1LC3C, GABARAP, GABARAPL1 and GABARAPL2). Interacts with VDAC1.

It is found in the mitochondrion matrix. It localises to the cytoplasm. In terms of biological role, protein involved in mitophagy by facilitating recruitment of the autophagy machinery required for clearance of damaged mitochondria. Accumulates on the mitochondria surface in response to mitochondrial depolarization and acts as a 'eat me' signal by recruiting proteins involved in selective autophagy, such as autophagy receptors (CALCOCO2/NDP52, NBR1, SQSTM1/p62, TAX1BP1 and WDFY3/ALFY) and ATG8 family proteins (MAP1LC3A, MAP1LC3B, MAP1LC3C, GABARAP, GABARAPL1 and GABARAPL2). May act as a positive regulator of L-type calcium channels. The chain is Protein NipSnap homolog 2 from Mus musculus (Mouse).